Here is a 259-residue protein sequence, read N- to C-terminus: uncharacterized protein (259 aa).

Residues 1–159 form the FAD-binding PCMH-type domain; that stretch reads MIEQFFRPDS…TEIIIKDPYR (159 aa).

This is an uncharacterized protein from Escherichia coli O157:H7.